Here is an 80-residue protein sequence, read N- to C-terminus: Cytochrome c oxidase subunit 7B, mitochondrial (80 aa).

The N-terminal 24 residues, 1–24 (MFPLVKNALNRLQVRSIQQTMARQ), are a transit peptide targeting the mitochondrion. Residues 25 to 32 (SHQKRTPD) are Mitochondrial matrix-facing. Residues 33–59 (FHDKYGNAVLASGATFCIVTWTYVATQ) traverse the membrane as a helical segment. Residues 60–80 (VGIEWNLSPVGRVTPKEWRNQ) lie on the Mitochondrial intermembrane side of the membrane.

This sequence belongs to the cytochrome c oxidase VIIb family. Component of the cytochrome c oxidase (complex IV, CIV), a multisubunit enzyme composed of 14 subunits. The complex is composed of a catalytic core of 3 subunits MT-CO1, MT-CO2 and MT-CO3, encoded in the mitochondrial DNA, and 11 supernumerary subunits COX4I, COX5A, COX5B, COX6A, COX6B, COX6C, COX7A, COX7B, COX7C, COX8 and NDUFA4, which are encoded in the nuclear genome. The complex exists as a monomer or a dimer and forms supercomplexes (SCs) in the inner mitochondrial membrane with NADH-ubiquinone oxidoreductase (complex I, CI) and ubiquinol-cytochrome c oxidoreductase (cytochrome b-c1 complex, complex III, CIII), resulting in different assemblies (supercomplex SCI(1)III(2)IV(1) and megacomplex MCI(2)III(2)IV(2)).

It localises to the mitochondrion inner membrane. It participates in energy metabolism; oxidative phosphorylation. In terms of biological role, component of the cytochrome c oxidase, the last enzyme in the mitochondrial electron transport chain which drives oxidative phosphorylation. The respiratory chain contains 3 multisubunit complexes succinate dehydrogenase (complex II, CII), ubiquinol-cytochrome c oxidoreductase (cytochrome b-c1 complex, complex III, CIII) and cytochrome c oxidase (complex IV, CIV), that cooperate to transfer electrons derived from NADH and succinate to molecular oxygen, creating an electrochemical gradient over the inner membrane that drives transmembrane transport and the ATP synthase. Cytochrome c oxidase is the component of the respiratory chain that catalyzes the reduction of oxygen to water. Electrons originating from reduced cytochrome c in the intermembrane space (IMS) are transferred via the dinuclear copper A center (CU(A)) of subunit 2 and heme A of subunit 1 to the active site in subunit 1, a binuclear center (BNC) formed by heme A3 and copper B (CU(B)). The BNC reduces molecular oxygen to 2 water molecules using 4 electrons from cytochrome c in the IMS and 4 protons from the mitochondrial matrix. Plays a role in proper central nervous system (CNS) development in vertebrates. This is Cytochrome c oxidase subunit 7B, mitochondrial (COX7B) from Pongo abelii (Sumatran orangutan).